Reading from the N-terminus, the 335-residue chain is Anthranilate phosphoribosyltransferase (335 aa).

5-phospho-alpha-D-ribose 1-diphosphate-binding positions include Gly79, 82 to 83 (GD), Thr87, 89 to 92 (NVST), 107 to 115 (KHCNKGVSS), and Ser119. Gly79 provides a ligand contact to anthranilate. Ser91 is a Mg(2+) binding site. Anthranilate is bound at residue Asn110. Arg165 contributes to the anthranilate binding site. 2 residues coordinate Mg(2+): Asp223 and Glu224.

The protein belongs to the anthranilate phosphoribosyltransferase family. As to quaternary structure, homodimer. Mg(2+) serves as cofactor.

The enzyme catalyses N-(5-phospho-beta-D-ribosyl)anthranilate + diphosphate = 5-phospho-alpha-D-ribose 1-diphosphate + anthranilate. It functions in the pathway amino-acid biosynthesis; L-tryptophan biosynthesis; L-tryptophan from chorismate: step 2/5. Catalyzes the transfer of the phosphoribosyl group of 5-phosphorylribose-1-pyrophosphate (PRPP) to anthranilate to yield N-(5'-phosphoribosyl)-anthranilate (PRA). The sequence is that of Anthranilate phosphoribosyltransferase from Buchnera aphidicola subsp. Schizaphis graminum (strain Sg).